An 820-amino-acid chain; its full sequence is Trimethylamine-N-oxide reductase (820 aa).

Residues 1 to 33 constitute a signal peptide (tat-type signal); the sequence is MAITRRSFLKGVATTSAASVIGPSLLASASANA. S179 serves as a coordination point for Mo-bis(molybdopterin guanine dinucleotide).

This sequence belongs to the prokaryotic molybdopterin-containing oxidoreductase family. It depends on Mo-bis(molybdopterin guanine dinucleotide) as a cofactor. Post-translationally, predicted to be exported by the Tat system. The position of the signal peptide cleavage has not been experimentally proven.

The protein resides in the periplasm. The enzyme catalyses trimethylamine + 2 Fe(III)-[cytochrome c] + H2O = trimethylamine N-oxide + 2 Fe(II)-[cytochrome c] + 3 H(+). Its function is as follows. Reduces trimethylamine-N-oxide (TMAO) into trimethylamine; an anaerobic reaction coupled to energy-yielding reactions. In Vibrio vulnificus (strain YJ016), this protein is Trimethylamine-N-oxide reductase (torA).